We begin with the raw amino-acid sequence, 137 residues long: Phospholipase A2 group V (137 aa).

The signal sequence occupies residues methionine 1–glycine 20. 6 disulfides stabilise this stretch: cysteine 46–cysteine 137, cysteine 48–cysteine 64, cysteine 63–cysteine 117, cysteine 70–cysteine 110, cysteine 79–cysteine 103, and cysteine 97–cysteine 108. The Ca(2+) site is built by tyrosine 47, glycine 49, and glycine 51. Histidine 67 is a catalytic residue. Aspartate 68 serves as a coordination point for Ca(2+). Aspartate 111 is a catalytic residue.

This sequence belongs to the phospholipase A2 family. Ca(2+) is required as a cofactor. Post-translationally, this enzyme lacks one of the seven disulfide bonds found in similar PA2 proteins. As to expression, expressed in peritoneal macrophages (at protein level). Expressed in heart, skeletal muscle and white adipose tissue.

The protein resides in the secreted. It localises to the cell membrane. The protein localises to the cytoplasmic vesicle. It is found in the phagosome. Its subcellular location is the recycling endosome. The protein resides in the golgi apparatus. It localises to the cis-Golgi network. The protein localises to the trans-Golgi network. The enzyme catalyses a 1,2-diacyl-sn-glycero-3-phosphocholine + H2O = a 1-acyl-sn-glycero-3-phosphocholine + a fatty acid + H(+). It carries out the reaction 1-hexadecanoyl-2-(9Z-octadecenoyl)-sn-glycero-3-phosphocholine + H2O = 1-hexadecanoyl-sn-glycero-3-phosphocholine + (9Z)-octadecenoate + H(+). The catalysed reaction is 1-hexadecanoyl-2-(5Z,8Z,11Z,14Z-eicosatetraenoyl)-sn-glycero-3-phosphocholine + H2O = 1-hexadecanoyl-sn-glycero-3-phosphocholine + (5Z,8Z,11Z,14Z)-eicosatetraenoate + H(+). It catalyses the reaction 1-hexadecanoyl-2-(9Z,12Z-octadecadienoyl)-sn-glycero-3-phosphoethanolamine + H2O = 1-hexadecanoyl-sn-glycero-3-phosphoethanolamine + (9Z,12Z)-octadecadienoate + H(+). The enzyme catalyses 1-hexadecanoyl-2-(5Z,8Z,11Z,14Z-eicosatetraenoyl)-sn-glycero-3-phosphoethanolamine + H2O = 1-hexadecanoyl-sn-glycero-3-phosphoethanolamine + (5Z,8Z,11Z,14Z)-eicosatetraenoate + H(+). It carries out the reaction 1-octadecanoyl-2-(5Z,8Z,11Z,14Z-eicosatetraenoyl)-sn-glycero-3-phospho-(1D-myo-inositol) + H2O = 1-octadecanoyl-sn-glycero-3-phospho-(1D-myo-inositol) + (5Z,8Z,11Z,14Z)-eicosatetraenoate + H(+). The catalysed reaction is 1-hexadecanoyl-2-(9Z-octadecenoyl)-sn-glycero-3-phosphoglycerol + H2O = 1-hexadecanoyl-sn-glycero-3-phosphoglycerol + (9Z)-octadecenoate + H(+). It catalyses the reaction N-hexadecanoyl-1,2-di-(9Z-octadecenoyl)-sn-glycero-3-phosphoethanolamine + H2O = N-hexadecanoyl-1-(9Z-octadecenoyl)-sn-glycero-3-phosphoethanolamine + (9Z)-octadecenoate + H(+). The enzyme catalyses 1'-[1,2-di-(9Z-octadecenoyl)-sn-glycero-3-phospho]-3'-[1-(9Z-octadecenoyl)-sn-glycero-3-phospho]-glycerol + H2O = 1',3'-bis-[1-(9Z-octadecenoyl)-sn-glycero-3-phospho]-glycerol + (9Z)-octadecenoate + H(+). It carries out the reaction 1',3'-bis[1,2-di-(9Z-octadecenoyl)-sn-glycero-3-phospho]-glycerol + H2O = 1'-[1,2-di-(9Z-octadecenoyl)-sn-glycero-3-phospho]-3'-[1-(9Z-octadecenoyl)-sn-glycero-3-phospho]-glycerol + (9Z)-octadecenoate + H(+). It participates in lipid metabolism; phospholipid metabolism. Its pathway is lipid metabolism; leukotriene B4 biosynthesis. The protein operates within lipid metabolism; leukotriene C4 biosynthesis. In terms of biological role, secretory calcium-dependent phospholipase A2 that primarily targets extracellular phospholipids. Hydrolyzes the ester bond of the fatty acyl group attached at sn-2 position of phospholipids (phospholipase A2 activity), preferentially releasing fatty acyl groups with a low degree of unsaturation such as oleoyl (C18:1) and linoleoyl (C18:2) groups. Hydrolyzes low-density lipoprotein (LDL) phospholipids releasing unsaturated fatty acids that drive macrophage polarization toward an M2 phenotype. May act in an autocrine and paracrine manner. Contributes to lipid remodeling of cellular membranes at different subcellular locations and generation of lipid mediators involved in pathogen clearance. Cleaves sn-2 fatty acyl chains of cardiolipin, a major component of the inner membrane of mitochondria and bacterial membranes. Promotes phagocytosis of bacteria in macrophages through production of lysophosphatidylethanolamines. Displays bactericidal activity against Gram-positive bacteria by directly hydrolyzing the phospholipids of the bacterial membrane. Promotes phagocytosis and killing of ingested fungi likely through controlling phagosome-lysosome fusion and phagosome maturation. Plays a role in biosynthesis of cysteinyl leukotrienes (CysLTs) in myeloid cells. In eosinophils, triggers perinuclear arachidonate release and LTC4 synthesis in a PLA2G4A-independent way. In neutrophils, amplifies CysLTs biosynthesis initiated by PLA2G4A. Promotes immune complex clearance in macrophages via stimulating synthesis of CysLTs, which act through CYSLTR1 to trigger phagocytosis. May regulate antigen processing in antigen-presenting cells. In pulmonary macrophages regulates IL33 production required for activation of group 2 innate lymphoid cells. May play a role in the biosynthesis of N-acyl ethanolamines that regulate energy metabolism. Hydrolyzes N-acyl phosphatidylethanolamines to N-acyl lysophosphatidylethanolamines, which are further cleaved by a lysophospholipase D to release N-acyl ethanolamines. This Mus musculus (Mouse) protein is Phospholipase A2 group V (Pla2g5).